We begin with the raw amino-acid sequence, 643 residues long: MLLGASLVGVLLFSKLVLKLPWTQVGFSLLFLYLGSGGWRFIRVFIKTIRRDIFGGLVLLKVKAKVRQCLRERRTVPILFASTVRRHPDKTALIFEGTDTLWTFRQLDEYSSSVANFLQARGLASGDVAAIFMENRNEFVGLWLGMAKLGVEAALINTNLRRDAQLHCLTTSRARALVFGSEMASAICEIHASLDPSLSLFCSGSWEPNAVPTSTEHLDPLLKDAPKHLPICPDKGFTDKLFYIYTSGTTGLPKAAIVVHSRYYRMAALVYYGFRMRPNDIVYDCLPLYHSAGNIVGIGQCLLHGMTVVIRKKFSASRFWDDCIKYNCTIVQYIGELCRYLLNQPPREAENQHQVRMALGNGLRQSIWTNFSSRFHIPQVAEFYGATECNCSLGNFDSQVGACGFNSRILSFVYPIRLVRVNEDTMELIRGPDGICIPCQPGEPGQLVGRIIQKDPLRRFDGYLNQGANDKKIAKDVFKKGDQAYLTGDVLVMDELGYLYFRDRTGDTFRWKGENVSTTEVEGTLSRLLDMADVAVYGVEVPGTEGRAGMAAVASPTGNCDLERFAQVLEKELPLYARPIFLRLLPELHKTGTYKFQKTELRKEGFDPAIVKDPLFYLDARKGRYVPLDQEAYSRIQAGEEKL.

The next 2 membrane-spanning stretches (helical) occupy residues Leu-20 to Ile-42 and Phe-139 to Ile-156. Tyr-243–Lys-254 contributes to the AMP binding site.

It belongs to the ATP-dependent AMP-binding enzyme family.

It is found in the endoplasmic reticulum membrane. It carries out the reaction a fatty acid(in) = a fatty acid(out). The enzyme catalyses (9Z,12Z)-octadecadienoate(out) = (9Z,12Z)-octadecadienoate(in). The catalysed reaction is (9Z)-octadecenoate(out) = (9Z)-octadecenoate(in). It catalyses the reaction hexadecanoate(out) = hexadecanoate(in). It carries out the reaction a long-chain fatty acid + ATP + CoA = a long-chain fatty acyl-CoA + AMP + diphosphate. The enzyme catalyses (5Z,8Z,11Z,14Z)-eicosatetraenoate + ATP + CoA = (5Z,8Z,11Z,14Z)-eicosatetraenoyl-CoA + AMP + diphosphate. The catalysed reaction is (9Z)-octadecenoate + ATP + CoA = (9Z)-octadecenoyl-CoA + AMP + diphosphate. It catalyses the reaction hexadecanoate + ATP + CoA = hexadecanoyl-CoA + AMP + diphosphate. It carries out the reaction (E)-hexadec-2-enoate + ATP + CoA = (2E)-hexadecenoyl-CoA + AMP + diphosphate. The enzyme catalyses a very long-chain fatty acid + ATP + CoA = a very long-chain fatty acyl-CoA + AMP + diphosphate. The catalysed reaction is tetracosanoate + ATP + CoA = tetracosanoyl-CoA + AMP + diphosphate. In terms of biological role, mediates the import of long-chain fatty acids (LCFA) into the cell by facilitating their transport across cell membranes. Appears to be the principal fatty acid transporter in small intestinal enterocytes. Also functions as an acyl-CoA ligase catalyzing the ATP-dependent formation of fatty acyl-CoA using LCFA and very-long-chain fatty acids (VLCFA) as substrates, which prevents fatty acid efflux from cells and might drive more fatty acid uptake. Plays a role in the formation of the epidermal barrier. Required for fat absorption in early embryogenesis. Probably involved in fatty acid transport across the blood barrier. Indirectly inhibits RPE65 via substrate competition and via production of VLCFA derivatives like lignoceroyl-CoA. Prevents light-induced degeneration of rods and cones. This is Long-chain fatty acid transport protein 4 (SLC27A4) from Pongo abelii (Sumatran orangutan).